Here is a 558-residue protein sequence, read N- to C-terminus: MARVEL domain-containing protein 2 (558 aa).

Basic and acidic residues predominate over residues 1–16 (MSNDGRSRNRDRRYDE). 2 disordered regions span residues 1–58 (MSND…PPFG) and 115–145 (CSPP…GTFS). Residues 1–194 (MSNDGRSRNR…YMKSWAGLLR (194 aa)) are Cytoplasmic-facing. Residues 45–58 (PLPPPPLPLQPPFG) are compositionally biased toward pro residues. A phosphoserine mark is found at Ser116, Ser120, and Ser161. Thr166 is subject to Phosphothreonine. Positions 188–367 (SWAGLLRILG…SALVCLKLWR (180 aa)) constitute an MARVEL domain. A helical transmembrane segment spans residues 195–215 (ILGVVELLLGAGVFACVTAYI). The Extracellular segment spans residues 216–223 (HKDSEWYN). A helical membrane pass occupies residues 224-244 (LFGYSQPYGMGGVGGLGSMYG). Residues 245 to 254 (GYYYTGPKTP) are Cytoplasmic-facing. A helical transmembrane segment spans residues 255-275 (FVLVVAGLAWITTIIILVLGM). Over 276–291 (SMYYRTILLDSNWWPL) the chain is Extracellular. The helical transmembrane segment at 292–312 (TEFGINVALFILYMAAAIVYV) threads the bilayer. Residues 313–319 (NDTNRGG) are Cytoplasmic-facing. Residues 320 to 337 (LCYYPLFNTPVNAVFCRV) traverse the membrane as a helical segment. The Extracellular portion of the chain corresponds to 338 to 341 (EGGQ). Residues 342-362 (IAAMIFLFVTMIVYLISALVC) form a helical membrane-spanning segment. Residues 363-558 (LKLWRHEAAR…VMNWDVQGYS (196 aa)) are Cytoplasmic-facing. Ser387 is subject to Phosphoserine. Lys412 participates in a covalent cross-link: Glycyl lysine isopeptide (Lys-Gly) (interchain with G-Cter in ubiquitin). Residues 439-548 (MPDYVAKYPV…IKQRIQEYDK (110 aa)) are a coiled coil. The 112-residue stretch at 440–551 (PDYVAKYPVI…RIQEYDKVMN (112 aa)) folds into the OCEL domain.

This sequence belongs to the ELL/occludin family. In terms of assembly, interacts with TJP1. Interacts with the ubiquitin ligase ITCH. Interacts (via C-terminal cytoplasmic domain) with LSR (via the cytoplasmic domain), ILDR1 and ILDR2; the interaction is required to recruit MARVELD2 to tricellular contacts. In terms of processing, ubiquitinated by ITCH; but this ubiquitination does not lead to proteasomal degradation. Polyubiquitinated at Lys-412 via 'Lys-63'-linked ubiquitin chains; deubiquitinated by USP53. Phosphorylated.

The protein localises to the cell membrane. It localises to the cell junction. It is found in the tight junction. Functionally, plays a role in the formation of tricellular tight junctions and of epithelial barriers. Required for normal hearing via its role in the separation of the endolymphatic and perilymphatic spaces of the organ of Corti in the inner ear, and for normal survival of hair cells in the organ of Corti. This Homo sapiens (Human) protein is MARVEL domain-containing protein 2.